Reading from the N-terminus, the 350-residue chain is MRPIKLMGHERSLTQVKYNREGDLLFSVAKDNAASIWYSSNGERLGTLEGHQGVIWSIDVDPDTHLCATGGGDLAIKLWKVETGKCVFTWESPSPVRRVAFSPDGSRLLAIADQVMGHIGTIVVYEINHDDESLTNQSTEPSLVIETPQDGAKATVAGWSANGEFIISGHDDGYIYKYDAQTGEAVNSLEAHGIHTEEKNVTVTDIQFAAEDRSYFITSSKDKCSTLIDVDTFEILKVYKADAPMNTAAITPLKDFVILGGGQEARNVTTTAESQGKFEARFYHKVFEDEIGRVKGHFGPLNTVAVHPDGTGYSSGGEDGFIRVHTFDKSYFDFYVDAAEKNTEKSAEKA.

6 WD repeats span residues 8–49, 51–89, 91–135, 149–188, 198–240, and 296–335; these read GHER…GTLE, HQGV…CVFT, ESPS…ESLT, QDGA…AVNS, EKNV…KVYK, and GHFG…FDFY.

Belongs to the eIF-3 subunit I family. In terms of assembly, component of the eukaryotic translation initiation factor 3 (eIF-3) complex.

It localises to the cytoplasm. In terms of biological role, component of the eukaryotic translation initiation factor 3 (eIF-3) complex, which is involved in protein synthesis of a specialized repertoire of mRNAs and, together with other initiation factors, stimulates binding of mRNA and methionyl-tRNAi to the 40S ribosome. The eIF-3 complex specifically targets and initiates translation of a subset of mRNAs involved in cell proliferation. In Scheffersomyces stipitis (strain ATCC 58785 / CBS 6054 / NBRC 10063 / NRRL Y-11545) (Yeast), this protein is Eukaryotic translation initiation factor 3 subunit I.